A 207-amino-acid polypeptide reads, in one-letter code: Large ribosomal subunit protein uL4 (207 aa).

Residues 50-76 (AVKNRSAVSGGGRKPWKQKGTGRARQG) are disordered.

This sequence belongs to the universal ribosomal protein uL4 family. In terms of assembly, part of the 50S ribosomal subunit.

Its function is as follows. One of the primary rRNA binding proteins, this protein initially binds near the 5'-end of the 23S rRNA. It is important during the early stages of 50S assembly. It makes multiple contacts with different domains of the 23S rRNA in the assembled 50S subunit and ribosome. Functionally, forms part of the polypeptide exit tunnel. In Macrococcus caseolyticus (strain JCSC5402) (Macrococcoides caseolyticum), this protein is Large ribosomal subunit protein uL4.